A 228-amino-acid polypeptide reads, in one-letter code: tRNA (guanine-N(1)-)-methyltransferase (228 aa).

Residues Gly111 and 130–135 (IGDFVL) each bind S-adenosyl-L-methionine.

It belongs to the RNA methyltransferase TrmD family. In terms of assembly, homodimer.

It is found in the cytoplasm. It catalyses the reaction guanosine(37) in tRNA + S-adenosyl-L-methionine = N(1)-methylguanosine(37) in tRNA + S-adenosyl-L-homocysteine + H(+). Specifically methylates guanosine-37 in various tRNAs. The protein is tRNA (guanine-N(1)-)-methyltransferase of Ureaplasma parvum serovar 3 (strain ATCC 27815 / 27 / NCTC 11736).